The following is a 182-amino-acid chain: Lipid A acyltransferase PagP (182 aa).

An N-terminal signal peptide occupies residues 1–21 (MTQYFRSLAFFLLPVPATAMA). Cys22 carries N-palmitoyl cysteine lipidation. The S-diacylglycerol cysteine moiety is linked to residue Cys22. Catalysis depends on residues His55, Asp98, and Ser99.

It belongs to the lipid A palmitoyltransferase family. In terms of assembly, homodimer.

Its subcellular location is the cell outer membrane. It catalyses the reaction a lipid A + a 1,2-diacyl-sn-glycero-3-phosphocholine = a hepta-acyl lipid A + a 2-acyl-sn-glycero-3-phosphocholine. It carries out the reaction a lipid IVA + a 1,2-diacyl-sn-glycero-3-phosphocholine = a lipid IVB + a 2-acyl-sn-glycero-3-phosphocholine. The enzyme catalyses a lipid IIA + a 1,2-diacyl-sn-glycero-3-phosphocholine = a lipid IIB + a 2-acyl-sn-glycero-3-phosphocholine. Its function is as follows. Transfers a fatty acid residue from the sn-1 position of a phospholipid to the N-linked hydroxyfatty acid chain on the proximal unit of lipid A or its precursors. In Bordetella pertussis (strain CS), this protein is Lipid A acyltransferase PagP.